The following is a 214-amino-acid chain: Transmembrane emp24 domain-containing protein p24delta10 (214 aa).

A signal peptide spans 1-24; it reads MFLQSQKLWTMLLILAIWSPISHS. The Lumenal portion of the chain corresponds to 25 to 181; the sequence is LHFDLHSGRT…QDLNRSTNTK (157 aa). Positions 34–149 constitute a GOLD domain; sequence TKCIAEDIKS…VEVMEFEVKS (116 aa). Residues 164-177 are a coiled coil; sequence LRDREEEMQDLNRS. Arg-167 is modified (omega-N-methylated arginine). Asn-175 carries N-linked (GlcNAc...) asparagine glycosylation. A helical membrane pass occupies residues 182-202; it reads MAWLSVLSFFVCIGVAGMQFL. Topologically, residues 203–214 are cytoplasmic; sequence HLKTFFEKKKVI. The short motif at 207–208 is the COPII vesicle coat-binding element; sequence FF. The short motif at 207–214 is the COPI vesicle coat-binding element; it reads FFEKKKVI.

Belongs to the EMP24/GP25L family. Probably oligomerizes with other members of the EMP24/GP25L family. Associates with the COPI vesicle coat (coatomer). Associates with the COPII vesicle coat (coatomer).

It is found in the endoplasmic reticulum membrane. The protein localises to the golgi apparatus. Its subcellular location is the cis-Golgi network membrane. It localises to the golgi stack membrane. In terms of biological role, involved in vesicular protein trafficking. Mainly functions in the early secretory pathway. Thought to act as cargo receptor at the lumenal side for incorporation of secretory cargo molecules into transport vesicles and to be involved in vesicle coat formation at the cytoplasmic side. In Arabidopsis thaliana (Mouse-ear cress), this protein is Transmembrane emp24 domain-containing protein p24delta10.